The primary structure comprises 379 residues: Isocitrate dehydrogenase [NAD] subunit 2, mitochondrial (379 aa).

A mitochondrion-targeting transit peptide spans 1 to 27; that stretch reads MSMLSTLRTAGSLRTFSRSACYSFQRF. Substrate contacts are provided by Arg129, Arg139, Arg160, and Asp247. Residues Asp247, Asp273, and Asp277 each coordinate Mg(2+).

The protein belongs to the isocitrate and isopropylmalate dehydrogenases family. As to quaternary structure, octamer of two non-identical subunits IDH1 and IDH2. Mg(2+) serves as cofactor. It depends on Mn(2+) as a cofactor.

The protein resides in the mitochondrion. The enzyme catalyses D-threo-isocitrate + NAD(+) = 2-oxoglutarate + CO2 + NADH. Functionally, performs an essential role in the oxidative function of the citric acid cycle and is involved in glutamate biosynthesis. Also binds RNA; specifically to the 5'-untranslated leaders of mitochondrial mRNAs. In Schizosaccharomyces pombe (strain 972 / ATCC 24843) (Fission yeast), this protein is Isocitrate dehydrogenase [NAD] subunit 2, mitochondrial (idh2).